The following is a 191-amino-acid chain: Protein adenylyltransferase NmFic (191 aa).

The 126-residue stretch at Gly-37–Lys-162 folds into the Fido domain. ATP is bound by residues Lys-67, Asn-104–His-107, Gly-112–Arg-118, and Lys-140–Tyr-143. An Inhibitory (S/T)XXXE(G/N) motif motif is present at residues Ser-182–Gly-187. Tyr-183 is subject to O-AMP-tyrosine; in vitro. Residue Glu-186 coordinates ATP.

Homodimer. Auto-AMPylation at Tyr-183 in vitro.

It catalyses the reaction L-tyrosyl-[protein] + ATP = O-(5'-adenylyl)-L-tyrosyl-[protein] + diphosphate. It carries out the reaction L-threonyl-[protein] + ATP = 3-O-(5'-adenylyl)-L-threonyl-[protein] + diphosphate. With respect to regulation, adenylyltransferase activity is inhibited by the inhibitory helix present at the C-terminus: Glu-186 binds ATP and competes with ATP-binding at Arg-118, thereby preventing adenylyltransferase activity. Activation dissociates ATP-binding from Glu-186, allowing ordered binding of the entire ATP moiety with the alpha-phosphate in an orientation that is productive for accepting an incoming target hydroxyl side chain. Functionally, adenylyltransferase that mediates the addition of adenosine 5'-monophosphate (AMP) to specific residues of target proteins. The protein is Protein adenylyltransferase NmFic of Neisseria meningitidis serogroup B (strain ATCC BAA-335 / MC58).